The primary structure comprises 1087 residues: Error-prone DNA polymerase 2 (1087 aa).

The tract at residues 1033 to 1064 is disordered; that stretch reads DGAFRPPTGRGDEFAHGSPGSADSRGKAPPGV.

It belongs to the DNA polymerase type-C family. DnaE2 subfamily.

The protein localises to the cytoplasm. It catalyses the reaction DNA(n) + a 2'-deoxyribonucleoside 5'-triphosphate = DNA(n+1) + diphosphate. In terms of biological role, DNA polymerase involved in damage-induced mutagenesis and translesion synthesis (TLS). It is not the major replicative DNA polymerase. The polypeptide is Error-prone DNA polymerase 2 (Rhizobium meliloti (strain 1021) (Ensifer meliloti)).